The sequence spans 305 residues: Methionyl-tRNA formyltransferase (305 aa).

S108 to P111 contributes to the (6S)-5,6,7,8-tetrahydrofolate binding site.

Belongs to the Fmt family.

The catalysed reaction is L-methionyl-tRNA(fMet) + (6R)-10-formyltetrahydrofolate = N-formyl-L-methionyl-tRNA(fMet) + (6S)-5,6,7,8-tetrahydrofolate + H(+). Functionally, attaches a formyl group to the free amino group of methionyl-tRNA(fMet). The formyl group appears to play a dual role in the initiator identity of N-formylmethionyl-tRNA by promoting its recognition by IF2 and preventing the misappropriation of this tRNA by the elongation apparatus. The polypeptide is Methionyl-tRNA formyltransferase (Thermus thermophilus (strain ATCC 27634 / DSM 579 / HB8)).